We begin with the raw amino-acid sequence, 124 residues long: Large ribosomal subunit protein bL12 (124 aa).

The protein belongs to the bacterial ribosomal protein bL12 family. In terms of assembly, homodimer. Part of the ribosomal stalk of the 50S ribosomal subunit. Forms a multimeric L10(L12)X complex, where L10 forms an elongated spine to which 2 to 4 L12 dimers bind in a sequential fashion. Binds GTP-bound translation factors.

Its function is as follows. Forms part of the ribosomal stalk which helps the ribosome interact with GTP-bound translation factors. Is thus essential for accurate translation. In Liberibacter africanus subsp. capensis, this protein is Large ribosomal subunit protein bL12.